The sequence spans 490 residues: Aspartyl/glutamyl-tRNA(Asn/Gln) amidotransferase subunit B (490 aa).

It belongs to the GatB/GatE family. GatB subfamily. In terms of assembly, heterotrimer of A, B and C subunits.

It catalyses the reaction L-glutamyl-tRNA(Gln) + L-glutamine + ATP + H2O = L-glutaminyl-tRNA(Gln) + L-glutamate + ADP + phosphate + H(+). The catalysed reaction is L-aspartyl-tRNA(Asn) + L-glutamine + ATP + H2O = L-asparaginyl-tRNA(Asn) + L-glutamate + ADP + phosphate + 2 H(+). In terms of biological role, allows the formation of correctly charged Asn-tRNA(Asn) or Gln-tRNA(Gln) through the transamidation of misacylated Asp-tRNA(Asn) or Glu-tRNA(Gln) in organisms which lack either or both of asparaginyl-tRNA or glutaminyl-tRNA synthetases. The reaction takes place in the presence of glutamine and ATP through an activated phospho-Asp-tRNA(Asn) or phospho-Glu-tRNA(Gln). This chain is Aspartyl/glutamyl-tRNA(Asn/Gln) amidotransferase subunit B, found in Methylorubrum populi (strain ATCC BAA-705 / NCIMB 13946 / BJ001) (Methylobacterium populi).